Here is a 329-residue protein sequence, read N- to C-terminus: Cathepsin K (329 aa).

Residues 1 to 15 (MWGLTVLLLPVVSFA) form the signal peptide. Positions 16–114 (LYPEEILDTQ…TLYIPDWEGR (99 aa)) are cleaved as a propeptide — activation peptide. Asn103 is a glycosylation site (N-linked (GlcNAc...) asparagine). Cystine bridges form between Cys136–Cys177, Cys170–Cys210, and Cys269–Cys318. Residue Cys139 is part of the active site. Residues His276 and Asn296 contribute to the active site.

This sequence belongs to the peptidase C1 family.

It is found in the lysosome. Its subcellular location is the secreted. The protein localises to the apical cell membrane. It catalyses the reaction Broad proteolytic activity. With small-molecule substrates and inhibitors, the major determinant of specificity is P2, which is preferably Leu, Met &gt; Phe, and not Arg.. Its function is as follows. Thiol protease involved in osteoclastic bone resorption and may participate partially in the disorder of bone remodeling. Displays potent endoprotease activity against fibrinogen at acid pH. May play an important role in extracellular matrix degradation. Involved in the release of thyroid hormone thyroxine (T4) by limited proteolysis of TG/thyroglobulin in the thyroid follicle lumen. This Bos taurus (Bovine) protein is Cathepsin K (CTSK).